Reading from the N-terminus, the 173-residue chain is Probable WRKY transcription factor 50 (173 aa).

Positions 107 to 172 (SEVEVLDDGF…YEGSHNHSSM (66 aa)) form a DNA-binding region, WRKY.

It belongs to the WRKY group II-c family.

The protein localises to the nucleus. In terms of biological role, transcription factor. Interacts specifically with the W box (5'-(T)TGAC[CT]-3'), a frequently occurring elicitor-responsive cis-acting element. The polypeptide is Probable WRKY transcription factor 50 (WRKY50) (Arabidopsis thaliana (Mouse-ear cress)).